The following is an 890-amino-acid chain: DNA mismatch repair protein MutS (890 aa).

607–614 lines the ATP pocket; sequence GPNMSGKS.

This sequence belongs to the DNA mismatch repair MutS family.

This protein is involved in the repair of mismatches in DNA. It is possible that it carries out the mismatch recognition step. This protein has a weak ATPase activity. The polypeptide is DNA mismatch repair protein MutS (Bacillus thuringiensis subsp. konkukian (strain 97-27)).